The primary structure comprises 95 residues: Ribonuclease P protein component 1 (95 aa).

It belongs to the eukaryotic/archaeal RNase P protein component 1 family. Consists of a catalytic RNA component and at least 4 protein subunits. Forms a subcomplex with Rnp4 which stimulates the catalytic RNA.

It is found in the cytoplasm. The catalysed reaction is Endonucleolytic cleavage of RNA, removing 5'-extranucleotides from tRNA precursor.. In terms of biological role, part of ribonuclease P, a protein complex that generates mature tRNA molecules by cleaving their 5'-ends. In Methanocaldococcus jannaschii (strain ATCC 43067 / DSM 2661 / JAL-1 / JCM 10045 / NBRC 100440) (Methanococcus jannaschii), this protein is Ribonuclease P protein component 1.